The chain runs to 251 residues: Triosephosphate isomerase (251 aa).

10 to 12 serves as a coordination point for substrate; it reads NWK. The active-site Electrophile is H98. Catalysis depends on E169, which acts as the Proton acceptor. Substrate is bound by residues G175, S213, and 234–235; that span reads GG.

It belongs to the triosephosphate isomerase family. As to quaternary structure, homodimer.

The protein resides in the cytoplasm. It carries out the reaction D-glyceraldehyde 3-phosphate = dihydroxyacetone phosphate. The protein operates within carbohydrate biosynthesis; gluconeogenesis. It functions in the pathway carbohydrate degradation; glycolysis; D-glyceraldehyde 3-phosphate from glycerone phosphate: step 1/1. Its function is as follows. Involved in the gluconeogenesis. Catalyzes stereospecifically the conversion of dihydroxyacetone phosphate (DHAP) to D-glyceraldehyde-3-phosphate (G3P). This chain is Triosephosphate isomerase, found in Paracidovorax citrulli (strain AAC00-1) (Acidovorax citrulli).